The primary structure comprises 426 residues: Chaperone SurA (426 aa).

Positions 1–19 (MGRVLVTIFVLFWPIGSFA) are cleaved as a signal peptide. 2 PpiC domains span residues 169 to 270 (DAQY…KLLD) and 280 to 379 (VTQT…QVLD).

The protein resides in the periplasm. It carries out the reaction [protein]-peptidylproline (omega=180) = [protein]-peptidylproline (omega=0). Its function is as follows. Chaperone involved in the correct folding and assembly of outer membrane proteins. Recognizes specific patterns of aromatic residues and the orientation of their side chains, which are found more frequently in integral outer membrane proteins. May act in both early periplasmic and late outer membrane-associated steps of protein maturation. The sequence is that of Chaperone SurA from Nitrosococcus oceani (strain ATCC 19707 / BCRC 17464 / JCM 30415 / NCIMB 11848 / C-107).